A 47-amino-acid polypeptide reads, in one-letter code: Large ribosomal subunit protein bL36A (47 aa).

It belongs to the bacterial ribosomal protein bL36 family.

The protein is Large ribosomal subunit protein bL36A of Yersinia enterocolitica serotype O:8 / biotype 1B (strain NCTC 13174 / 8081).